The following is a 735-amino-acid chain: Serine/threonine-protein kinase BRSK2 (735 aa).

A Protein kinase domain is found at Tyr20–Tyr271. ATP contacts are provided by residues Leu26–Val34 and Lys49. Asp142 serves as the catalytic Proton acceptor. Position 175 is a phosphothreonine; by LKB1 (Thr175). The residue at position 261 (Thr261) is a Phosphothreonine; by PKA. At Ser295 the chain carries Phosphoserine. In terms of domain architecture, UBA spans Asp298–Asp340. A compositionally biased stretch (basic and acidic residues) spans Pro346–Asp367. 2 disordered regions span residues Pro346–Trp476 and Arg492–Glu516. Phosphoserine occurs at positions 368, 383, 394, 413, 424, and 428. The span at Ser411–Pro429 shows a compositional bias: low complexity. The segment covering Thr432–Lys446 has biased composition (pro residues). Residue Ser456 is modified to Phosphoserine. A phosphothreonine mark is found at Thr460, Thr464, and Thr510. Ser513, Ser514, and Ser521 each carry phosphoserine. The short motif at Lys604–Asn606 is the KEN box element. The disordered stretch occupies residues Lys682–Pro735.

The protein belongs to the protein kinase superfamily. CAMK Ser/Thr protein kinase family. SNF1 subfamily. Interacts with FZR1, a regulatory subunit of the APC ubiquitin ligase complex. Interacts with COPS5. Interacts with PAK1. Requires Mg(2+) as cofactor. Post-translationally, may be phosphorylated at Thr-261 by PKA. Phosphorylated at Thr-175 by STK11/LKB1 in complex with STE20-related adapter-alpha (STRADA) pseudo kinase and CAB39. Not phosphorylated at Thr-175 by CaMKK2. In contrast, it is phosphorylated and activated by CaMKK1. May be inactivated via dephosphorylation of Thr-175 by PP2C. Polyubiquitinated by the APC complex in conjunction with FZR1, leading to its proteasomal degradation. Targeted for proteasomal degradation by interaction with COPS5. BRSK2 levels change during the cell cycle. BRSK2 levels are low at the G1/S boundary and gradually increase as cells progress into G2 phase. BRSK2 levels decrease rapidly at the end of mitosis. In terms of tissue distribution, detected in pancreas islets and in brain (at protein level). Detected in brain and pancreas.

It is found in the cytoplasm. It localises to the cytoskeleton. Its subcellular location is the microtubule organizing center. The protein localises to the centrosome. The protein resides in the perinuclear region. It is found in the endoplasmic reticulum. It carries out the reaction L-seryl-[protein] + ATP = O-phospho-L-seryl-[protein] + ADP + H(+). It catalyses the reaction L-threonyl-[protein] + ATP = O-phospho-L-threonyl-[protein] + ADP + H(+). The catalysed reaction is L-seryl-[tau protein] + ATP = O-phospho-L-seryl-[tau protein] + ADP + H(+). The enzyme catalyses L-threonyl-[tau protein] + ATP = O-phospho-L-threonyl-[tau protein] + ADP + H(+). With respect to regulation, activated by phosphorylation on Thr-175 by STK11/LKB1. Serine/threonine-protein kinase that plays a key role in polarization of neurons and axonogenesis, cell cycle progress and insulin secretion. Phosphorylates CDK16, CDC25C, MAPT/TAU, PAK1 and WEE1. Following phosphorylation and activation by STK11/LKB1, acts as a key regulator of polarization of cortical neurons, probably by mediating phosphorylation of microtubule-associated proteins such as MAPT/TAU at 'Thr-504' and 'Ser-554'. Also regulates neuron polarization by mediating phosphorylation of WEE1 at 'Ser-642' in post-mitotic neurons, leading to down-regulate WEE1 activity in polarized neurons. Plays a role in the regulation of the mitotic cell cycle progress and the onset of mitosis. Plays a role in the regulation of insulin secretion in response to elevated glucose levels, probably via phosphorylation of CDK16 and PAK1. While BRSK2 phosphorylated at Thr-175 can inhibit insulin secretion, BRSK2 phosphorylated at Thr-261 can promote insulin secretion. Regulates reorganization of the actin cytoskeleton. May play a role in the apoptotic response triggered by endoplasmic reticulum (ER) stress. The polypeptide is Serine/threonine-protein kinase BRSK2 (Brsk2) (Mus musculus (Mouse)).